A 612-amino-acid polypeptide reads, in one-letter code: Putative zinc metalloproteinase C607.06c (612 aa).

H303 contributes to the Zn(2+) binding site. The active site involves E304. H307 and H313 together coordinate Zn(2+). The Jacalin-type lectin domain occupies 477-612; it reads VYRSERYGLR…FMDSIGFFIK (136 aa).

It belongs to the peptidase M10B family. Zn(2+) serves as cofactor.

This Schizosaccharomyces pombe (strain 972 / ATCC 24843) (Fission yeast) protein is Putative zinc metalloproteinase C607.06c.